A 316-amino-acid polypeptide reads, in one-letter code: Mannose-6-phosphate isomerase (316 aa).

Zn(2+) contacts are provided by Gln95, His97, Glu114, and His171. Arg191 is an active-site residue.

The protein belongs to the mannose-6-phosphate isomerase type 1 family. It depends on Zn(2+) as a cofactor.

It catalyses the reaction D-mannose 6-phosphate = D-fructose 6-phosphate. This chain is Mannose-6-phosphate isomerase (pmi), found in Streptococcus mutans serotype c (strain ATCC 700610 / UA159).